Reading from the N-terminus, the 160-residue chain is Cytochrome b6-f complex subunit 4 (160 aa).

Helical transmembrane passes span 36–56 (LLYI…GLAV), 95–115 (LLGI…PFIE), and 128–148 (IAMS…IGAC).

It belongs to the cytochrome b family. PetD subfamily. The 4 large subunits of the cytochrome b6-f complex are cytochrome b6, subunit IV (17 kDa polypeptide, PetD), cytochrome f and the Rieske protein, while the 4 small subunits are PetG, PetL, PetM and PetN. The complex functions as a dimer.

It is found in the cellular thylakoid membrane. Its function is as follows. Component of the cytochrome b6-f complex, which mediates electron transfer between photosystem II (PSII) and photosystem I (PSI), cyclic electron flow around PSI, and state transitions. The sequence is that of Cytochrome b6-f complex subunit 4 from Prochlorococcus marinus (strain MIT 9301).